A 533-amino-acid chain; its full sequence is Bifunctional aspartate aminotransferase and L-aspartate beta-decarboxylase (533 aa).

Positions 115 and 256 each coordinate L-aspartate. An N6-(pyridoxal phosphate)lysine modification is found at K315. Residue R497 participates in L-aspartate binding.

It belongs to the class-I pyridoxal-phosphate-dependent aminotransferase family. As to quaternary structure, homododecamer. Pyridoxal 5'-phosphate serves as cofactor.

The enzyme catalyses L-aspartate + H(+) = L-alanine + CO2. The catalysed reaction is L-aspartate + 2-oxoglutarate = oxaloacetate + L-glutamate. Bifunctional enzyme that has both L-aspartate decarboxylase and transaminase activity. This Comamonas testosteroni (Pseudomonas testosteroni) protein is Bifunctional aspartate aminotransferase and L-aspartate beta-decarboxylase.